Here is a 213-residue protein sequence, read N- to C-terminus: Putative manganese efflux pump MntP (213 aa).

The next 6 membrane-spanning stretches (helical) occupy residues 3 to 23 (ILSIVLTGFGLAMDAFAVSVA), 36 to 56 (ALKVALFFGGFQALMPLIGWG), 67 to 87 (AFDHWIAFILLGFIGGKMIFE), 130 to 150 (LAIATSIDALAVGVSFAFLGI), 152 to 172 (IVQTIIIIGIITFVLCFLGVI), and 187 to 207 (IVGGVILILIGINILLEHTGI).

It belongs to the MntP (TC 9.B.29) family.

The protein resides in the cell membrane. In terms of biological role, probably functions as a manganese efflux pump. This chain is Putative manganese efflux pump MntP, found in Clostridium perfringens (strain SM101 / Type A).